The sequence spans 126 residues: Late histone H2A.3, gonadal (126 aa).

Basic residues predominate over residues 1–18 (MSGRGKGAKAKGKAKSRS). Residues 1–21 (MSGRGKGAKAKGKAKSRSSRA) are disordered. Position 2 is an N-acetylserine (Ser2). A Phosphoserine modification is found at Ser2. Residue Gln104 is modified to N5-methylglutamine. Lys119 is covalently cross-linked (Glycyl lysine isopeptide (Lys-Gly) (interchain with G-Cter in ubiquitin)).

This sequence belongs to the histone H2A family. The nucleosome is a histone octamer containing two molecules each of H2A, H2B, H3 and H4 assembled in one H3-H4 heterotetramer and two H2A-H2B heterodimers. The octamer wraps approximately 147 bp of DNA. Post-translationally, monoubiquitination of Lys-119 gives a specific tag for epigenetic transcriptional repression. In terms of processing, phosphorylation of Ser-2 directly represses transcription.

It localises to the nucleus. It is found in the chromosome. Core component of nucleosome. Nucleosomes wrap and compact DNA into chromatin, limiting DNA accessibility to the cellular machineries which require DNA as a template. Histones thereby play a central role in transcription regulation, DNA repair, DNA replication and chromosomal stability. DNA accessibility is regulated via a complex set of post-translational modifications of histones, also called histone code, and nucleosome remodeling. This chain is Late histone H2A.3, gonadal, found in Psammechinus miliaris (Green sea urchin).